A 20-amino-acid chain; its full sequence is Phenol-soluble modulin alpha 4 peptide (20 aa).

It belongs to the phenol-soluble modulin alpha peptides family.

In terms of biological role, peptide which can recruit, activate and subsequently lyse neutrophils, thus eliminating the main cellular defense against infection. This chain is Phenol-soluble modulin alpha 4 peptide (psmA4), found in Staphylococcus aureus (strain bovine RF122 / ET3-1).